We begin with the raw amino-acid sequence, 161 residues long: Cyclic pyranopterin monophosphate synthase (161 aa).

Substrate contacts are provided by residues 75–77 (LCH) and 113–114 (ME). D128 is an active-site residue.

The protein belongs to the MoaC family. As to quaternary structure, homohexamer; trimer of dimers.

It catalyses the reaction (8S)-3',8-cyclo-7,8-dihydroguanosine 5'-triphosphate = cyclic pyranopterin phosphate + diphosphate. It participates in cofactor biosynthesis; molybdopterin biosynthesis. Functionally, catalyzes the conversion of (8S)-3',8-cyclo-7,8-dihydroguanosine 5'-triphosphate to cyclic pyranopterin monophosphate (cPMP). In Citrobacter koseri (strain ATCC BAA-895 / CDC 4225-83 / SGSC4696), this protein is Cyclic pyranopterin monophosphate synthase.